The following is an 823-amino-acid chain: Leucine--tRNA ligase (823 aa).

Residues 42–52 (PYPSGTLHMGH) carry the 'HIGH' region motif. Positions 575–579 (KMSKS) match the 'KMSKS' region motif. Lys578 contributes to the ATP binding site.

The protein belongs to the class-I aminoacyl-tRNA synthetase family.

The protein localises to the cytoplasm. It carries out the reaction tRNA(Leu) + L-leucine + ATP = L-leucyl-tRNA(Leu) + AMP + diphosphate. The polypeptide is Leucine--tRNA ligase (Legionella pneumophila subsp. pneumophila (strain Philadelphia 1 / ATCC 33152 / DSM 7513)).